A 283-amino-acid chain; its full sequence is Protease HtpX (283 aa).

2 helical membrane-spanning segments follow: residues 4–24 (ILLF…ILSV) and 33–53 (GGIL…SLFL). His-139 lines the Zn(2+) pocket. Glu-140 is an active-site residue. His-143 lines the Zn(2+) pocket. 2 helical membrane passes run 147-167 (GDMV…IFLS) and 190-210 (IYFL…SIIA). Position 218 (Glu-218) interacts with Zn(2+).

This sequence belongs to the peptidase M48B family. It depends on Zn(2+) as a cofactor.

The protein localises to the cell inner membrane. This Haemophilus influenzae (strain PittEE) protein is Protease HtpX.